We begin with the raw amino-acid sequence, 155 residues long: Pre-hexon-linking protein VIII (155 aa).

Residues 44–84 (GVHRTKDIKPEDLVGRGIQLNSYQPPTTRLKPERVFQLAGG) constitute a propeptide that is removed on maturation.

This sequence belongs to the adenoviridae hexon-linking protein family. Interacts with the peripentonal hexons as well as the hexons in the facets. Part of a complex composed of the core-capsid bridging protein, the endosome lysis protein VI and the hexon-linking protein VIII; these interactions bridge the virus core to the capsid. Cleaved by the viral protease during virion maturation. May cause the middle segment to be shed from the capsid.

It is found in the virion. The protein resides in the host nucleus. Structural component of the virion that acts as a cement protein on the capsid interior and which glue the peripentonal hexons and group-of-nine hexons together. The chain is Pre-hexon-linking protein VIII from Bos taurus (Bovine).